The primary structure comprises 69 residues: Protein translocase subunit SecE (69 aa).

The chain crosses the membrane as a helical span at residues 43–63; that stretch reads GLGICLLGFVGFVIHVPITYL.

The protein belongs to the SecE/SEC61-gamma family. Component of the Sec protein translocase complex. Heterotrimer consisting of SecY (alpha), SecG (beta) and SecE (gamma) subunits. The heterotrimers can form oligomers, although 1 heterotrimer is thought to be able to translocate proteins. Interacts with the ribosome. May interact with SecDF, and other proteins may be involved.

It is found in the cell membrane. Functionally, essential subunit of the Sec protein translocation channel SecYEG. Clamps together the 2 halves of SecY. May contact the channel plug during translocation. This chain is Protein translocase subunit SecE, found in Methanococcus maripaludis (strain DSM 14266 / JCM 13030 / NBRC 101832 / S2 / LL).